A 505-amino-acid polypeptide reads, in one-letter code: ATP nucleosidase Cap17 (505 aa).

The tract at residues 1-229 (MTNTNNEYVL…RLSEIAVELL (229 aa)) is cyclic oligonucleotide sensing-domain. Residues 239–505 (LHTPSVLILT…DYLQHGWIRA (267 aa)) are purine nucleoside phosphorylase domain.

The protein belongs to the Cap17 family.

The enzyme catalyses ATP + H2O = D-ribose 5-triphosphate + adenine. It carries out the reaction dATP + H2O = 2-deoxyribose 5-triphosphate + adenine. Effector protein with (d)ATP degrading activity of a CBASS antivirus system. CBASS (cyclic oligonucleotide-based antiphage signaling system) provides immunity against bacteriophage. A CD-NTase protein synthesizes cyclic nucleotides in response to infection; these serve as specific second messenger signals. The signals activate a diverse range of effectors, leading to bacterial cell death and thus abortive phage infection. A type III CBASS system. Expression of this CBASS system (Cap18-Cap6-Cap7-CdnC-CapW-Cap17) in a susceptible E.coli (strain MG1655) confers resistance to bacteriophage P1, leading to cell lysis. By 50 minutes post-infection, ATP levels are markedly reduced while dATP has been eliminated. The C-terminal purine nucleoside phosphorylase (PNP) domain cleaves the N-glycosidic bond of (d)ATP to release adenine and a sugar triphosphate; has no activity on other (d)NTPs, nor on DNA or RNA. In vivo during phage infection has pleoitropic effects on nucleotide accumulation. This protein may be activated by the cognate CD-NTase (CdnC). This Escherichia coli (strain KTE188) protein is ATP nucleosidase Cap17.